A 918-amino-acid chain; its full sequence is Serine/threonine-protein kinase D1 (918 aa).

The residue at position 93 (Tyr93) is a Phosphotyrosine. The Phorbol-ester/DAG-type 1 zinc finger occupies 144–194; sequence PHALFVHSYRAPAFCDHCGEMLWGLVRQGLKCEGCGLNYHKRCAFKIPNNC. Ser203, Ser206, Ser217, and Ser221 each carry phosphoserine. The Phorbol-ester/DAG-type 2 zinc finger occupies 276 to 326; it reads PHTFVIHSYTRPTVCQFCKKLLKGLFRQGLQCKDCRFNCHKRCAPKVPNNC. Disordered stretches follow at residues 338–362 and 379–410; these read SPGA…NSGL and AEGQ…SNNI. A compositionally biased stretch (acidic residues) spans 345–355; it reads VVMEEGSDDND. Ser351 carries the phosphoserine modification. Polar residues predominate over residues 400–410; it reads RTISPSTSNNI. Phosphoserine; by MAPK13 is present on residues Ser403 and Ser407. One can recognise a PH domain in the interval 428-547; that stretch reads TVMKEGWMVH…WEVAIQHALM (120 aa). Phosphotyrosine is present on Tyr438. Phosphoserine is present on Ser454. A Phosphotyrosine; by ABL modification is found at Tyr469. Phosphotyrosine is present on Tyr508. A Phosphoserine modification is found at Ser554. The Protein kinase domain occupies 589 to 845; it reads IFPDEVLGSG…VDKTLSHPWL (257 aa). ATP-binding positions include 595 to 603 and Lys618; that span reads LGSGQFGIV. The active-site Proton acceptor is Asp712. Ser744 is modified (phosphoserine; by PKC/PRKCD). Position 748 is a phosphoserine; by autocatalysis and PKC/PRKCD (Ser748). At Tyr755 the chain carries Phosphotyrosine. Ser916 is modified (phosphoserine; by autocatalysis).

It belongs to the protein kinase superfamily. CAMK Ser/Thr protein kinase family. PKD subfamily. Interacts (via N-terminus) with ADAP1/CENTA1. Interacts with MAPK13. Interacts with DAPK1 in an oxidative stress-regulated manner. Interacts with USP28; the interaction induces phosphorylation of USP28 and activated KRAS-mediated stabilization of ZNF304. Interacts with AKAP13 (via C-terminal domain). Requires Mg(2+) as cofactor. Post-translationally, phosphorylated at Ser-403 and Ser-407 by MAPK13 during regulation of insulin secretion in pancreatic beta cells. Phosphorylated by DAPK1. Phosphorylated at Tyr-93 and by ABL at Tyr-469, which primes the kinase in response to oxidative stress, and promotes a second step activating phosphorylation at Ser-744/Ser-748 by PKRD. Phosphorylated at Ser-916 upon S.enterica infection in macrophages.

Its subcellular location is the cytoplasm. It is found in the cell membrane. It localises to the golgi apparatus. The protein resides in the trans-Golgi network. It carries out the reaction L-seryl-[protein] + ATP = O-phospho-L-seryl-[protein] + ADP + H(+). It catalyses the reaction L-threonyl-[protein] + ATP = O-phospho-L-threonyl-[protein] + ADP + H(+). With respect to regulation, activated by DAG and phorbol esters. Phorbol-ester/DAG-type domain 1 binds DAG with high affinity and appears to play the dominant role in mediating translocation to the cell membrane and trans-Golgi network. Phorbol-ester/DAG-type domain 2 binds phorbol ester with higher affinity. Autophosphorylation of Ser-748 and phosphorylation of Ser-744 by PKC relieves auto-inhibition by the PH domain. Phosphorylation on Tyr-469 by the SRC-ABL1 pathway in response to oxidative stress, is also required for activation. Activated by DAPK1 under oxidative stress. In terms of biological role, serine/threonine-protein kinase that converts transient diacylglycerol (DAG) signals into prolonged physiological effects downstream of PKC, and is involved in the regulation of MAPK8/JNK1 and Ras signaling, Golgi membrane integrity and trafficking, cell survival through NF-kappa-B activation, cell migration, cell differentiation by mediating HDAC7 nuclear export, cell proliferation via MAPK1/3 (ERK1/2) signaling, and plays a role in cardiac hypertrophy, VEGFA-induced angiogenesis, genotoxic-induced apoptosis and flagellin-stimulated inflammatory response. Phosphorylates the epidermal growth factor receptor (EGFR) on dual threonine residues, which leads to the suppression of epidermal growth factor (EGF)-induced MAPK8/JNK1 activation and subsequent JUN phosphorylation. Phosphorylates RIN1, inducing RIN1 binding to 14-3-3 proteins YWHAB, YWHAE and YWHAZ and increased competition with RAF1 for binding to GTP-bound form of Ras proteins (NRAS, HRAS and KRAS). Acts downstream of the heterotrimeric G-protein beta/gamma-subunit complex to maintain the structural integrity of the Golgi membranes, and is required for protein transport along the secretory pathway. In the trans-Golgi network (TGN), regulates the fission of transport vesicles that are on their way to the plasma membrane. May act by activating the lipid kinase phosphatidylinositol 4-kinase beta (PI4KB) at the TGN for the local synthesis of phosphorylated inositol lipids, which induces a sequential production of DAG, phosphatidic acid (PA) and lyso-PA (LPA) that are necessary for membrane fission and generation of specific transport carriers to the cell surface. Under oxidative stress, is phosphorylated at Tyr-469 via SRC-ABL1 and contributes to cell survival by activating IKK complex and subsequent nuclear translocation and activation of NFKB1. Involved in cell migration by regulating integrin alpha-5/beta-3 recycling and promoting its recruitment in newly forming focal adhesion. In osteoblast differentiation, mediates the bone morphogenetic protein 2 (BMP2)-induced nuclear export of HDAC7, which results in the inhibition of HDAC7 transcriptional repression of RUNX2. In neurons, plays an important role in neuronal polarity by regulating the biogenesis of TGN-derived dendritic vesicles, and is involved in the maintenance of dendritic arborization and Golgi structure in hippocampal cells. May potentiate mitogenesis induced by the neuropeptide bombesin or vasopressin by mediating an increase in the duration of MAPK1/3 (ERK1/2) signaling, which leads to accumulation of immediate-early gene products including FOS that stimulate cell cycle progression. Plays an important role in the proliferative response induced by low calcium in keratinocytes, through sustained activation of MAPK1/3 (ERK1/2) pathway. Downstream of novel PKC signaling, plays a role in cardiac hypertrophy by phosphorylating HDAC5, which in turn triggers XPO1/CRM1-dependent nuclear export of HDAC5, MEF2A transcriptional activation and induction of downstream target genes that promote myocyte hypertrophy and pathological cardiac remodeling. Mediates cardiac troponin I (TNNI3) phosphorylation at the PKA sites, which results in reduced myofilament calcium sensitivity, and accelerated crossbridge cycling kinetics. The PRKD1-HDAC5 pathway is also involved in angiogenesis by mediating VEGFA-induced specific subset of gene expression, cell migration, and tube formation. In response to VEGFA, is necessary and required for HDAC7 phosphorylation which induces HDAC7 nuclear export and endothelial cell proliferation and migration. During apoptosis induced by cytarabine and other genotoxic agents, PRKD1 is cleaved by caspase-3 at Asp-378, resulting in activation of its kinase function and increased sensitivity of cells to the cytotoxic effects of genotoxic agents. In epithelial cells, is required for transducing flagellin-stimulated inflammatory responses by binding and phosphorylating TLR5, which contributes to MAPK14/p38 activation and production of inflammatory cytokines. Acts as an activator of NLRP3 inflammasome assembly by mediating phosphorylation of NLRP3. May play a role in inflammatory response by mediating activation of NF-kappa-B. May be involved in pain transmission by directly modulating TRPV1 receptor. Plays a role in activated KRAS-mediated stabilization of ZNF304 in colorectal cancer (CRC) cells. Regulates nuclear translocation of transcription factor TFEB in macrophages upon live S.enterica infection. The sequence is that of Serine/threonine-protein kinase D1 (Prkd1) from Mus musculus (Mouse).